Reading from the N-terminus, the 406-residue chain is Protein ALP1-like (406 aa).

A Nuclear localization signal motif is present at residues 8–15 (KKKKRAEK). The DDE Tnp4 domain occupies 187–353 (IDITHIVMNL…IIFVCCLLHN (167 aa)). A divalent metal cation contacts are provided by aspartate 188, aspartate 240, and aspartate 279.

This sequence belongs to the HARBI1 family. Requires a divalent metal cation as cofactor.

The protein localises to the nucleus. Its function is as follows. Transposase-derived protein that may have nuclease activity. The sequence is that of Protein ALP1-like from Arabidopsis thaliana (Mouse-ear cress).